The sequence spans 90 residues: Antitoxin epsilon 2 (90 aa).

Belongs to the epsilon antitoxin family. As to quaternary structure, in the presence of the zeta toxin, forms an inactive PezA(2)PezT(2) heterotetramer.

Functionally, antitoxin component of a type II toxin-antitoxin (TA) system. Neutralizes the toxic effect of zeta toxin. Part of a postsegregational killing (PSK) system involved in the killing of plasmid-free cells. Continuous synthesis of the epsilon antitoxin is required to counteract the zeta toxin. The sequence is that of Antitoxin epsilon 2 from Enterococcus faecalis (Streptococcus faecalis).